Here is a 268-residue protein sequence, read N- to C-terminus: Large ribosomal subunit protein bL9m (268 aa).

Residues 1 to 52 (MAAAAFAVPRGVQLRVLTERLLRGGVRELLRPRLSGSTPGSERDFSLSHSRG) constitute a mitochondrion transit peptide.

It belongs to the bacterial ribosomal protein bL9 family. As to quaternary structure, component of the mitochondrial ribosome large subunit (39S) which comprises a 16S rRNA and about 50 distinct proteins.

The protein resides in the mitochondrion. The polypeptide is Large ribosomal subunit protein bL9m (MRPL9) (Bos taurus (Bovine)).